Consider the following 312-residue polypeptide: tRNA uridine(34) hydroxylase (312 aa).

A Rhodanese domain is found at 123 to 216 (DRDDVVVLDV…YGIEQGGEDF (94 aa)). The Cysteine persulfide intermediate role is filled by C176.

This sequence belongs to the TrhO family.

It catalyses the reaction uridine(34) in tRNA + AH2 + O2 = 5-hydroxyuridine(34) in tRNA + A + H2O. Catalyzes oxygen-dependent 5-hydroxyuridine (ho5U) modification at position 34 in tRNAs. In Cytophaga hutchinsonii (strain ATCC 33406 / DSM 1761 / CIP 103989 / NBRC 15051 / NCIMB 9469 / D465), this protein is tRNA uridine(34) hydroxylase.